The following is a 284-amino-acid chain: Riboflavin transporter (284 aa).

EamA domains follow at residues 2-129 (VAAC…LIII) and 141-273 (LLPI…SLYL). The next 8 helical transmembrane spans lie at 26-46 (SVII…PLLV), 58-78 (FGLH…WIYA), 82-102 (VPIW…ILCA), 115-135 (LLTT…WSDS), 136-156 (YTVY…YSVM), 167-187 (ASIS…LWLA), 195-215 (ITAP…FTAL), and 247-267 (GWIV…ALII).

This sequence belongs to the drug/metabolite transporter (DMT) superfamily. 10 TMS drug/metabolite exporter (DME) (TC 2.A.7.3) family.

It localises to the cell membrane. Its function is as follows. Transports riboflavin into the cell. This is Riboflavin transporter from Brucella anthropi (strain ATCC 49188 / DSM 6882 / CCUG 24695 / JCM 21032 / LMG 3331 / NBRC 15819 / NCTC 12168 / Alc 37) (Ochrobactrum anthropi).